Reading from the N-terminus, the 828-residue chain is Protein SEY1 homolog (828 aa).

Over 1 to 718 (MTEDVMNDDF…SSKNGISWKN (718 aa)) the chain is Cytoplasmic. Positions 44 to 284 (GFNYNVLSIL…VPSDGFFYYA (241 aa)) constitute a GB1/RHD3-type G domain. 54–61 (GCQSSGKS) lines the GTP pocket. Residues 719–739 (IPPPFWILLLLCSWNELCSVL) form a helical membrane-spanning segment. Over 740–742 (RIV) the chain is Lumenal. The chain crosses the membrane as a helical span at residues 743-763 (FKVQVLIPLIILGFIVVQYFS). Residues 764 to 828 (HLVFGTSADA…NDSGKKAEEN (65 aa)) lie on the Cytoplasmic side of the membrane.

Belongs to the TRAFAC class dynamin-like GTPase superfamily. GB1/RHD3 GTPase family. RHD3 subfamily.

Its subcellular location is the endoplasmic reticulum membrane. In terms of biological role, probable GTP-binding protein that may be involved in cell development. The polypeptide is Protein SEY1 homolog (Babesia bovis).